We begin with the raw amino-acid sequence, 405 residues long: Na(+)/H(+) antiporter NhaA 1 (405 aa).

Helical transmembrane passes span 20-40, 68-88, 105-125, 134-154, 163-183, 186-206, 214-234, 263-283, 301-321, 334-354, and 371-391; these read FVSDASAGILLILVAAAAMIV, LHLWINDGLMAIFFFVVGLEV, LPVLAAIAGMAVPAIVYVGVV, GWAIPAATDIAFAMGVLGLLG, LFLLTVAIVDDIGAVLVIAAF, ANLKVMWLVIALGIFGVMVGM, IWPYILVALVLWVAVLFSGVH, GLAPWSAYLVVPIFGFANAGV, IAAGLVVGKQLGIFGIIVAAV, WIEIWGVSILTGIGFTMSLFI, and IGILGGSLISAILGYTILRLT.

The protein belongs to the NhaA Na(+)/H(+) (TC 2.A.33) antiporter family.

It localises to the cell inner membrane. The catalysed reaction is Na(+)(in) + 2 H(+)(out) = Na(+)(out) + 2 H(+)(in). Na(+)/H(+) antiporter that extrudes sodium in exchange for external protons. This chain is Na(+)/H(+) antiporter NhaA 1, found in Erythrobacter litoralis (strain HTCC2594).